We begin with the raw amino-acid sequence, 276 residues long: Formamidopyrimidine-DNA glycosylase (276 aa).

Proline 2 (schiff-base intermediate with DNA) is an active-site residue. The active-site Proton donor is glutamate 3. Lysine 60 (proton donor; for beta-elimination activity) is an active-site residue. DNA-binding residues include histidine 93 and arginine 112. Residues 240–274 (NVYGKKGEPCVTCGTILEKTVVGGRGTHYCPICQP) form an FPG-type zinc finger. Catalysis depends on arginine 264, which acts as the Proton donor; for delta-elimination activity.

The protein belongs to the FPG family. Monomer. Requires Zn(2+) as cofactor.

It carries out the reaction Hydrolysis of DNA containing ring-opened 7-methylguanine residues, releasing 2,6-diamino-4-hydroxy-5-(N-methyl)formamidopyrimidine.. It catalyses the reaction 2'-deoxyribonucleotide-(2'-deoxyribose 5'-phosphate)-2'-deoxyribonucleotide-DNA = a 3'-end 2'-deoxyribonucleotide-(2,3-dehydro-2,3-deoxyribose 5'-phosphate)-DNA + a 5'-end 5'-phospho-2'-deoxyribonucleoside-DNA + H(+). Involved in base excision repair of DNA damaged by oxidation or by mutagenic agents. Acts as a DNA glycosylase that recognizes and removes damaged bases. Has a preference for oxidized purines, such as 7,8-dihydro-8-oxoguanine (8-oxoG). Has AP (apurinic/apyrimidinic) lyase activity and introduces nicks in the DNA strand. Cleaves the DNA backbone by beta-delta elimination to generate a single-strand break at the site of the removed base with both 3'- and 5'-phosphates. This Bacillus cereus (strain ATCC 10987 / NRS 248) protein is Formamidopyrimidine-DNA glycosylase.